A 137-amino-acid polypeptide reads, in one-letter code: Peptide methionine sulfoxide reductase MsrB (137 aa).

The MsrB domain occupies 7–129 (AEELKKNLSD…NSASLRFTDG (123 aa)). Zn(2+) contacts are provided by Cys46, Cys49, Cys95, and Cys98. Residue Cys118 is the Nucleophile of the active site.

The protein belongs to the MsrB Met sulfoxide reductase family. Zn(2+) serves as cofactor.

It carries out the reaction L-methionyl-[protein] + [thioredoxin]-disulfide + H2O = L-methionyl-(R)-S-oxide-[protein] + [thioredoxin]-dithiol. This chain is Peptide methionine sulfoxide reductase MsrB, found in Shigella dysenteriae serotype 1 (strain Sd197).